The primary structure comprises 524 residues: Cytochrome P450 monooxygenase lnaC (524 aa).

Residues 16–36 form a helical membrane-spanning segment; it reads ALAVSCIAVSLFLLSPWIAYA. N-linked (GlcNAc...) asparagine glycosylation is present at Asn-150. Cys-471 contacts heme.

This sequence belongs to the cytochrome P450 family. Requires heme as cofactor.

The protein localises to the membrane. It participates in secondary metabolite biosynthesis. Functionally, cytochrome P450 monooxygenase; part of the lna gene cluster that mediates the biosynthesis of diastereomeric piperazines. Lna and lnb clusters encode sets of enzymes that produce overlapping sets of previously undescribed metabolites such as piperazinomycin-like metabolites or morpholine. The lna and lnb biosynthetic pathways appear to be part of a signaling network that controls the formation of sclerotia, a resilient overwintering structure. One primary function of the non-canonical nonribosomal peptide synthetases lnaA and lnbA consists in the reduction of L-tyrosine. The presence in the clusters of tailoring enzymes such as the oxidoreductases lnaB, lnbB, lnaE or lnbE, as well as of the cytochrome P450 monooxygenases lnaC, lnaD, or lnbC, might explain formation of various diastereomeric piperazines. This is Cytochrome P450 monooxygenase lnaC from Aspergillus flavus (strain ATCC 200026 / FGSC A1120 / IAM 13836 / NRRL 3357 / JCM 12722 / SRRC 167).